The sequence spans 156 residues: D-aminoacyl-tRNA deacylase (156 aa).

A Gly-cisPro motif, important for rejection of L-amino acids motif is present at residues 142-143 (GP).

Belongs to the DTD family. In terms of assembly, homodimer.

Its subcellular location is the cytoplasm. It catalyses the reaction glycyl-tRNA(Ala) + H2O = tRNA(Ala) + glycine + H(+). It carries out the reaction a D-aminoacyl-tRNA + H2O = a tRNA + a D-alpha-amino acid + H(+). Its function is as follows. An aminoacyl-tRNA editing enzyme that deacylates mischarged D-aminoacyl-tRNAs. Also deacylates mischarged glycyl-tRNA(Ala), protecting cells against glycine mischarging by AlaRS. Acts via tRNA-based rather than protein-based catalysis; rejects L-amino acids rather than detecting D-amino acids in the active site. By recycling D-aminoacyl-tRNA to D-amino acids and free tRNA molecules, this enzyme counteracts the toxicity associated with the formation of D-aminoacyl-tRNA entities in vivo and helps enforce protein L-homochirality. The sequence is that of D-aminoacyl-tRNA deacylase from Cupriavidus metallidurans (strain ATCC 43123 / DSM 2839 / NBRC 102507 / CH34) (Ralstonia metallidurans).